The primary structure comprises 4349 residues: Dynein heavy chain, cytoplasmic (4349 aa).

A stem region spans residues 1-1907 (MEVTSAAAPS…YIKMANAKLN (1907 aa)). Coiled-coil stretches lie at residues 459 to 480 (WEEN…RNEK), 1178 to 1215 (LMKF…STAQ), 1266 to 1293 (SQWE…QAKI), 1334 to 1354 (ESRI…KEAL), 1560 to 1577 (YKEF…LNRV), and 1640 to 1670 (NIPN…EKER). AAA stretches follow at residues 1908 to 2133 (YGFE…VLVS), 2201 to 2459 (NAIR…FTTA), 2565 to 2814 (EVNT…WVRG), and 2908 to 3177 (TFCE…QGKV). Residue 1946–1953 (GPAGTGKT) coordinates ATP. A coiled-coil region spans residues 2194–2217 (ANLEALENAIRELAAERHLVVNEL). ATP is bound by residues 2239–2246 (GNSGSGKS), 2604–2611 (GPPGSGKT), and 2946–2953 (GVSGSGKT). Coiled-coil stretches lie at residues 3186–3294 (LDFV…LAKA), 3420–3477 (GPLK…EMSR), and 3774–3807 (DNVI…VEEI). Residues 3186–3477 (LDFVTQYIKL…TQAIKAEMSR (292 aa)) form a stalk region. AAA regions lie at residues 3563 to 3792 (LSTA…EISA) and 4001 to 4213 (AERF…IVDT).

It belongs to the dynein heavy chain family. In terms of assembly, consists of at least two heavy chains and a number of intermediate and light chains.

Its subcellular location is the cytoplasm. The protein localises to the cytoskeleton. In terms of biological role, cytoplasmic dynein acts as a motor for the intracellular retrograde motility of vesicles and organelles along microtubules. Dynein has ATPase activity; the force-producing power stroke is thought to occur on release of ADP. The polypeptide is Dynein heavy chain, cytoplasmic (DHC1) (Fusarium vanettenii (Neocosmospora pisi)).